The chain runs to 462 residues: Argininosuccinate lyase (462 aa).

Belongs to the lyase 1 family. Argininosuccinate lyase subfamily.

It is found in the cytoplasm. It carries out the reaction 2-(N(omega)-L-arginino)succinate = fumarate + L-arginine. Its pathway is amino-acid biosynthesis; L-arginine biosynthesis; L-arginine from L-ornithine and carbamoyl phosphate: step 3/3. This is Argininosuccinate lyase from Nitratiruptor sp. (strain SB155-2).